The sequence spans 426 residues: D-tagatose-1,6-bisphosphate aldolase subunit KbaZ (426 aa).

The protein belongs to the GatZ/KbaZ family. KbaZ subfamily. As to quaternary structure, forms a complex with KbaY.

Its pathway is carbohydrate metabolism; D-tagatose 6-phosphate degradation; D-glyceraldehyde 3-phosphate and glycerone phosphate from D-tagatose 6-phosphate: step 2/2. In terms of biological role, component of the tagatose-1,6-bisphosphate aldolase KbaYZ that is required for full activity and stability of the Y subunit. Could have a chaperone-like function for the proper and stable folding of KbaY. When expressed alone, KbaZ does not show any aldolase activity. The chain is D-tagatose-1,6-bisphosphate aldolase subunit KbaZ from Escherichia coli (strain SMS-3-5 / SECEC).